Here is a 353-residue protein sequence, read N- to C-terminus: Ribosomal RNA small subunit methyltransferase H (353 aa).

S-adenosyl-L-methionine-binding positions include 49–51, aspartate 68, phenylalanine 95, aspartate 126, and glutamine 133; that span reads GGH.

It belongs to the methyltransferase superfamily. RsmH family.

It is found in the cytoplasm. It catalyses the reaction cytidine(1402) in 16S rRNA + S-adenosyl-L-methionine = N(4)-methylcytidine(1402) in 16S rRNA + S-adenosyl-L-homocysteine + H(+). Specifically methylates the N4 position of cytidine in position 1402 (C1402) of 16S rRNA. This is Ribosomal RNA small subunit methyltransferase H from Corynebacterium urealyticum (strain ATCC 43042 / DSM 7109).